Consider the following 493-residue polypeptide: Gamma-aminobutyric acid receptor subunit alpha-3 (493 aa).

A signal peptide spans 1 to 28 (MITTQMWHFYVTRVGLLLLISILPGTTG). Residues 27-54 (TGQGESRRQEPGDFVKQDIGGLSPKHAP) form a disordered region. Topologically, residues 29–276 (QGESRRQEPG…THFHLKRKIG (248 aa)) are extracellular. Residues 31-42 (ESRRQEPGDFVK) show a composition bias toward basic and acidic residues. The N-linked (GlcNAc...) asparagine glycan is linked to asparagine 63. A 4-aminobutanoate-binding site is contributed by arginine 119. 2 N-linked (GlcNAc...) asparagine glycosylation sites follow: asparagine 163 and asparagine 176. Threonine 182 contributes to the 4-aminobutanoate binding site. Residues cysteine 191 and cysteine 205 are joined by a disulfide bond. N-linked (GlcNAc...) asparagine glycosylation occurs at asparagine 228. The next 3 membrane-spanning stretches (helical) occupy residues 277 to 298 (YFVI…VSFW), 304 to 325 (VPAR…SISA), and 338 to 359 (MDWF…FATV). The Cytoplasmic segment spans residues 360–458 (NYFTKRSWAW…TYNSVSKVDK (99 aa)). Serine 427 is subject to Phosphoserine. The residue at position 428 (threonine 428) is a Phosphothreonine. Serine 434 and serine 443 each carry phosphoserine. A helical transmembrane segment spans residues 459 to 480 (ISRIIFPVLFAIFNLVYWATYV).

The protein belongs to the ligand-gated ion channel (TC 1.A.9) family. Gamma-aminobutyric acid receptor (TC 1.A.9.5) subfamily. GABRA3 sub-subfamily. Heteropentamer, formed by a combination of alpha (GABRA1-6), beta (GABRB1-3), gamma (GABRG1-3), delta (GABRD), epsilon (GABRE), rho (GABRR1-3), pi (GABRP) and theta (GABRQ) chains, each subunit exhibiting distinct physiological and pharmacological properties. Binds UBQLN1. Interacts with GPHN. Expressed in most brain regions. Expressed in lungs, in alveolar epithelium.

It is found in the postsynaptic cell membrane. Its subcellular location is the cell membrane. The enzyme catalyses chloride(in) = chloride(out). Alpha subunit of the heteropentameric ligand-gated chloride channel gated by gamma-aminobutyric acid (GABA), a major inhibitory neurotransmitter in the brain. GABA-gated chloride channels, also named GABA(A) receptors (GABAAR), consist of five subunits arranged around a central pore and contain GABA active binding site(s) located at the alpha and beta subunit interface(s). When activated by GABA, GABAARs selectively allow the flow of chloride anions across the cell membrane down their electrochemical gradient. Chloride influx into the postsynaptic neuron following GABAAR opening decreases the neuron ability to generate a new action potential, thereby reducing nerve transmission. In Rattus norvegicus (Rat), this protein is Gamma-aminobutyric acid receptor subunit alpha-3.